The primary structure comprises 257 residues: MANMLEVKHINKTYKGQVSYQALKQISFSIEEGEFTAVMGPSGSGKTTLLNIISTIDRPDSGDILINGENPHRLKRTKLAHFRRKQLGFVFQDFNLLDTLTIGENIMLPLTLEKEAPSVMEEKLHGIAAKLGIENLLNKRTFEVSGGQRQRAAIARAVIHKPSLILADEPTGNLDSKATKDVMETLQSLNRDDHVTALMVTHDPVSASYCRRVIFIKDGELFNEIYRGENRQVFYEQILDVLSMLGGNANDLSSVRL.

The ABC transporter domain occupies 5–243; it reads LEVKHINKTY…FYEQILDVLS (239 aa). Residue 40–47 participates in ATP binding; it reads GPSGSGKT.

The protein belongs to the ABC transporter superfamily. As to quaternary structure, the complex is composed of two ATP-binding proteins (YxdL) and two transmembrane proteins (YxdM).

In terms of biological role, part of the ABC transporter complex YxdLM which could be involved in peptide resistance. Responsible for energy coupling to the transport system. In Bacillus subtilis (strain 168), this protein is ABC transporter ATP-binding protein YxdL (yxdL).